Here is a 284-residue protein sequence, read N- to C-terminus: Bifunctional protein FolD (284 aa).

Residues 165-167 and S190 contribute to the NADP(+) site; that span reads GRS.

This sequence belongs to the tetrahydrofolate dehydrogenase/cyclohydrolase family. In terms of assembly, homodimer.

It carries out the reaction (6R)-5,10-methylene-5,6,7,8-tetrahydrofolate + NADP(+) = (6R)-5,10-methenyltetrahydrofolate + NADPH. The catalysed reaction is (6R)-5,10-methenyltetrahydrofolate + H2O = (6R)-10-formyltetrahydrofolate + H(+). Its pathway is one-carbon metabolism; tetrahydrofolate interconversion. Catalyzes the oxidation of 5,10-methylenetetrahydrofolate to 5,10-methenyltetrahydrofolate and then the hydrolysis of 5,10-methenyltetrahydrofolate to 10-formyltetrahydrofolate. The protein is Bifunctional protein FolD of Streptococcus mutans serotype c (strain ATCC 700610 / UA159).